Reading from the N-terminus, the 176-residue chain is MVTKPARMYTRITGPAYTRKEFMGGVPYPKITTFVQGNQKRDFPIEMQLIAMESCQVRHTALEAARVSVNRRMTEAAGLDNFYLKVVPYPHHVLREHKMATGAGADRISSGMRAAFGRPVGTAARVYQNDVIMIGRTDEAHAHELKIALKKAAIKLPTPCKVVITKGKEIAGAIGV.

Belongs to the universal ribosomal protein uL16 family.

This chain is Large ribosomal subunit protein uL16, found in Thermoplasma volcanium (strain ATCC 51530 / DSM 4299 / JCM 9571 / NBRC 15438 / GSS1).